Here is a 262-residue protein sequence, read N- to C-terminus: Small ribosomal subunit protein uS2 (262 aa).

Belongs to the universal ribosomal protein uS2 family.

The polypeptide is Small ribosomal subunit protein uS2 (Borrelia garinii subsp. bavariensis (strain ATCC BAA-2496 / DSM 23469 / PBi) (Borreliella bavariensis)).